A 372-amino-acid polypeptide reads, in one-letter code: DNA replication and repair protein RecF (372 aa).

Residue 30–37 (GENGQGKT) participates in ATP binding.

The protein belongs to the RecF family.

The protein localises to the cytoplasm. The RecF protein is involved in DNA metabolism; it is required for DNA replication and normal SOS inducibility. RecF binds preferentially to single-stranded, linear DNA. It also seems to bind ATP. The polypeptide is DNA replication and repair protein RecF (Anaeromyxobacter dehalogenans (strain 2CP-1 / ATCC BAA-258)).